The chain runs to 83 residues: Calsensin (83 aa).

2 consecutive EF-hand domains span residues 4–39 (KVKA…LDAY) and 46–81 (KVKE…LLCQ). Residues Asp17, Asn19, Asp21, Tyr23, Glu28, Asp59, Asn61, Asp63, Lys65, and Glu70 each coordinate Ca(2+).

In terms of tissue distribution, selectively expressed in a small group of neurons.

Its subcellular location is the cytoplasm. May function as a trigger protein which interacts with a larger protein. May mediate calcium-dependent signal transduction events in the growth cones and axons of a small group of sensory neurons which fasciculate in a single axon tract. This is Calsensin from Haemopis marmorata (Green horse leech).